The primary structure comprises 1157 residues: Probable inactive leucine-rich repeat receptor kinase XIAO (1157 aa).

A signal peptide spans 1 to 21; sequence MPPPPRLLFLLVMLLVVAAPG. The N-linked (GlcNAc...) asparagine glycan is linked to N58. LRR repeat units lie at residues 101–125, 127–149, 150–172, 173–196, 198–220, 221–245, 247–269, 270–293, 296–319, 320–343, 344–367, 368–391, 393–414, 415–439, 440–463, 464–487, 489–511, 513–536, 537–559, 561–583, 584–608, 609–631, 632–656, 658–680, 681–704, and 706–728; these read LVYL…LSRI, SLRA…FLAN, LTNL…VSFP, PSLK…VSAS, TSLQ…SLGT, LQDL…LSNC, ALLH…VAAI, PSLQ…AFGG, NSSL…VSLG, KDLQ…LAGA, GGLT…VGQL, TALQ…IGRC, ALQV…ALGG, LRRL…LGNL, SWLE…LFVL, GNLT…IGNL, ALQS…IGNL, NLRV…LFGL, PQLQ…GFSS, WSLR…TYGY, LPSL…LANC, SNLT…DFAR, LGEL…ISNC, SLVT…LSNL, SKLQ…LAQI, and GMLS…LGSR. N149 carries an N-linked (GlcNAc...) asparagine glycan. N-linked (GlcNAc...) asparagine glycosylation is found at N192, N204, and N244. N296 carries N-linked (GlcNAc...) asparagine glycosylation. N438 is a glycosylation site (N-linked (GlcNAc...) asparagine). N-linked (GlcNAc...) asparagine glycosylation is found at N465, N494, and N524. N567, N607, N610, N655, N679, N692, and N711 each carry an N-linked (GlcNAc...) asparagine glycan. The helical transmembrane segment at 765-785 threads the bilayer; sequence LALLIGVVAATVLLLVLFCCC. A disordered region spans residues 804-825; sequence VKKRRRSPGRGSGSSGTSTDSV. Positions 849–1144 constitute a Protein kinase domain; the sequence is FDEENVLSRG…LEGCRVGPDI (296 aa). ATP contacts are provided by residues 855 to 863, 930 to 932, 936 to 939, 980 to 985, and D998; these read LSRGRHGLV, DYM, NLAT, and DVKPQN.

It belongs to the protein kinase superfamily. Ser/Thr protein kinase family. Expressed in developing culm, coleoptile, primary root, young spikelet, young leaf blade and leaf sheath, floral meristem primordia, stamen primordia, and lemma and palea primordia.

The protein resides in the cell membrane. Its function is as follows. Functions in the early stages of organ development by regulating cell division rate. Is probably involved in the regulation of a number of cell-cycle genes. May act as regulator of brassinosteroid (BR) signaling and cell-cycle controlling organ growth. This is Probable inactive leucine-rich repeat receptor kinase XIAO from Oryza sativa subsp. japonica (Rice).